The chain runs to 508 residues: UDP-N-acetylmuramoylalanine--D-glutamate ligase (508 aa).

138-144 serves as a coordination point for ATP; that stretch reads GTNGKTT. The segment at 294 to 314 is disordered; the sequence is FDEPAPRRKKDAPPPTRAGGR.

Belongs to the MurCDEF family.

The protein resides in the cytoplasm. The catalysed reaction is UDP-N-acetyl-alpha-D-muramoyl-L-alanine + D-glutamate + ATP = UDP-N-acetyl-alpha-D-muramoyl-L-alanyl-D-glutamate + ADP + phosphate + H(+). It functions in the pathway cell wall biogenesis; peptidoglycan biosynthesis. In terms of biological role, cell wall formation. Catalyzes the addition of glutamate to the nucleotide precursor UDP-N-acetylmuramoyl-L-alanine (UMA). The sequence is that of UDP-N-acetylmuramoylalanine--D-glutamate ligase from Bordetella parapertussis (strain 12822 / ATCC BAA-587 / NCTC 13253).